A 478-amino-acid chain; its full sequence is Dihydrolipoyl dehydrogenase (478 aa).

Residues 34–49, K58, and G122 each bind FAD; that span reads EKYI…GGTC. The cysteines at positions 49 and 54 are disulfide-linked. Residues 188-192, E211, V245, and 276-279 contribute to the NAD(+) site; these read GAGVI and AVGR. Positions 319 and 327 each coordinate FAD. The active-site Proton acceptor is H451.

The protein belongs to the class-I pyridine nucleotide-disulfide oxidoreductase family. Homodimer. FAD serves as cofactor.

The protein localises to the cytoplasm. It catalyses the reaction N(6)-[(R)-dihydrolipoyl]-L-lysyl-[protein] + NAD(+) = N(6)-[(R)-lipoyl]-L-lysyl-[protein] + NADH + H(+). The branched-chain alpha-keto dehydrogenase complex catalyzes the overall conversion of alpha-keto acids to acyl-CoA and CO(2). It contains multiple copies of 3 enzymatic components: branched-chain alpha-keto acid decarboxylase (E1), lipoamide acyltransferase (E2) and lipoamide dehydrogenase (E3). In terms of biological role, also acts in the glycine cleavage system. The chain is Dihydrolipoyl dehydrogenase (lpdG) from Pseudomonas aeruginosa (strain ATCC 15692 / DSM 22644 / CIP 104116 / JCM 14847 / LMG 12228 / 1C / PRS 101 / PAO1).